A 240-amino-acid chain; its full sequence is MQLPPLQSATLIRRYKRFLADVQLDNGEVLTIHCANTGAMTGCGEAGDIVWYSHSDSQTRKYPHSWELTELKNGNMVCINTHRSNQLTLEALQNKQIKALAMYEQILPEVKYGEENSRIDFLLKGDGLPDCYVEVKSVTLVKNTIGMFPDAVTTRGQKHLRELIAMKKRGHRAVVFFAGLHNGFDCFKVAEYIDPEYDKLLQEAIQEGVEVYAYAGKFDFSDKKPTALSLTHCVPYIGKK.

The protein belongs to the SfsA family.

In Pasteurella multocida (strain Pm70), this protein is Sugar fermentation stimulation protein homolog.